The chain runs to 146 residues: Cytochrome c-type biogenesis protein CcmE (146 aa).

The Cytoplasmic segment spans residues 1–8 (MHPKRKKR). Residues 9–29 (LLIVLAGLAVVAVASGLILNA) form a helical; Signal-anchor for type II membrane protein membrane-spanning segment. The Periplasmic portion of the chain corresponds to 30 to 146 (FRSNLVFFHT…IQRAGETVVQ (117 aa)). The heme site is built by histidine 124 and tyrosine 128.

The protein belongs to the CcmE/CycJ family.

It localises to the cell inner membrane. Its function is as follows. Heme chaperone required for the biogenesis of c-type cytochromes. Transiently binds heme delivered by CcmC and transfers the heme to apo-cytochromes in a process facilitated by CcmF and CcmH. The sequence is that of Cytochrome c-type biogenesis protein CcmE from Laribacter hongkongensis (strain HLHK9).